The chain runs to 95 residues: CRISPR-associated endoribonuclease Cas2 1 (95 aa).

Aspartate 8 provides a ligand contact to Mg(2+).

Belongs to the CRISPR-associated endoribonuclease Cas2 protein family. In terms of assembly, homodimer, forms a heterotetramer with a Cas1 homodimer. It depends on Mg(2+) as a cofactor.

Its function is as follows. CRISPR (clustered regularly interspaced short palindromic repeat), is an adaptive immune system that provides protection against mobile genetic elements (viruses, transposable elements and conjugative plasmids). CRISPR clusters contain sequences complementary to antecedent mobile elements and target invading nucleic acids. CRISPR clusters are transcribed and processed into CRISPR RNA (crRNA). Functions as a ssRNA-specific endoribonuclease. Involved in the integration of spacer DNA into the CRISPR cassette. The polypeptide is CRISPR-associated endoribonuclease Cas2 1 (Pyrobaculum aerophilum (strain ATCC 51768 / DSM 7523 / JCM 9630 / CIP 104966 / NBRC 100827 / IM2)).